The primary structure comprises 415 residues: Tyrosine--tRNA ligase (415 aa).

The 'HIGH' region motif lies at 54 to 63; the sequence is PTGSNIHLGH. Residues 248-252 carry the 'KMSKS' region motif; sequence KMSKT. Position 251 (lysine 251) interacts with ATP. The S4 RNA-binding domain maps to 351–415; sequence AKAFYLMSAV…GKKTFRRLTA (65 aa).

It belongs to the class-I aminoacyl-tRNA synthetase family. TyrS type 2 subfamily. As to quaternary structure, homodimer.

The protein localises to the cytoplasm. The enzyme catalyses tRNA(Tyr) + L-tyrosine + ATP = L-tyrosyl-tRNA(Tyr) + AMP + diphosphate + H(+). Catalyzes the attachment of tyrosine to tRNA(Tyr) in a two-step reaction: tyrosine is first activated by ATP to form Tyr-AMP and then transferred to the acceptor end of tRNA(Tyr). The chain is Tyrosine--tRNA ligase from Synechococcus sp. (strain CC9902).